The sequence spans 416 residues: MIFKFSQKALVALYLVVGLAEAVPSKSRVVSRASTFDYNGIVRGVNIGGWLVLEPWITPSIFDNAGDAAVDEWTLTATLGQDQAKAVLSQHWSTFITQDDFQQIAQAGMNHVRIPIGYWAVSSLPDEPYVDGQLEYLDNAISWAREAGLKVVIDLHGAPGSQNGFDNSGRKGPIAWQQGDTVSQTVDAFRALAERYLPQSDVVTAIEALNEPNIPGGVSEAGLRDYYNQIADVVRQIDPGTSVFLSDGFLSTESWNGFKTGEDVVMDTHHYEMFDNYLISLDIDGHVKSACDFGKQIEGSDKPVVVGEWSGAVTDCTKHLNGKGVSTRYQGEYANNVKYGDCANTTQGSVADLSDQERTDTRRFIEAQLDAYEGKNGWLFWTWKTEGAPGWDMQDLLANGVFPSPLTDRQFPNQCA.

The signal sequence occupies residues 1–22 (MIFKFSQKALVALYLVVGLAEA). The active-site Proton donor is E211. Intrachain disulfides connect C291–C415 and C316–C342. E308 functions as the Nucleophile in the catalytic mechanism. N344 carries N-linked (GlcNAc...) asparagine glycosylation.

It belongs to the glycosyl hydrolase 5 (cellulase A) family. As to quaternary structure, monomer. The cofactor is Mn(2+).

The protein resides in the secreted. It catalyses the reaction Successive hydrolysis of beta-D-glucose units from the non-reducing ends of (1-&gt;3)-beta-D-glucans, releasing alpha-glucose.. Beta-glucanases participate in the metabolism of beta-glucan, the main structural component of the cell wall. It could also function biosynthetically as a transglycosylase. This is Probable glucan 1,3-beta-glucosidase A (exgA) from Aspergillus fumigatus (strain ATCC MYA-4609 / CBS 101355 / FGSC A1100 / Af293) (Neosartorya fumigata).